The primary structure comprises 257 residues: Protein YIPF5 (257 aa).

Topologically, residues 1-124 (MSGFENLNTD…KVADGSIMNE (124 aa)) are cytoplasmic. Positions 75 to 106 (PASPQPFYGNNFEDEPPLLEELGINFDHIWQK) are interaction with Sec23. A helical transmembrane segment spans residues 125 to 145 (TDLAGPMVFCLAFGATLLLAG). A topological domain (lumenal) is located at residue lysine 146. Residues 147 to 167 (IQFGYVYGISAIGCLGMFCLL) traverse the membrane as a helical segment. Residues 168-173 (NLMSMT) lie on the Cytoplasmic side of the membrane. The chain crosses the membrane as a helical span at residues 174-194 (GVSFGCVASVLGYCLLPMILL). Residues 195 to 196 (SS) lie on the Lumenal side of the membrane. A helical transmembrane segment spans residues 197–217 (FAVIFSLQGMVGIILTAGIIG). Residues 218 to 236 (WCSFSASKIFISALAMEGQ) are Cytoplasmic-facing. Residues 237–257 (QLLVAYPCALLYGVFALISVF) form a helical membrane-spanning segment.

It belongs to the YIP1 family. In terms of assembly, interacts with the COPII coat components Sec23 (SEC23A and/or SEC23B) and Sec24 (SEC24A and/or SEC24B). Interacts with YIF1A. May interact with RAB1A. Interacts with YIPF3 and YIPF4. As to expression, ubiquitously expressed with abundant expression in pancreatic tissue, islets, beta cells, and brain. Highly expressed in coronary smooth muscles.

Its subcellular location is the endoplasmic reticulum membrane. It localises to the golgi apparatus. The protein localises to the cis-Golgi network membrane. The protein resides in the cytoplasmic vesicle. It is found in the COPII-coated vesicle. Functionally, plays a role in transport between endoplasmic reticulum and Golgi. In pancreatic beta cells, required to transport proinsulin from endoplasmic reticulum into the Golgi. This is Protein YIPF5 from Homo sapiens (Human).